The primary structure comprises 547 residues: Sensor histidine kinase CitA (547 aa).

The Cytoplasmic segment spans residues 1 to 23; that stretch reads MSIYPMYTRKITHWFARRSFQNR. A helical membrane pass occupies residues 24–44; sequence IFLLILFTSTIVMLAMSWYLT. Residues 45 to 180 lie on the Periplasmic side of the membrane; sequence DITEERLHYQ…TIEQLENWLS (136 aa). Citrate contacts are provided by Arg109, His112, Arg150, and Lys152. The helical transmembrane segment at 181–201 threads the bilayer; sequence LQISSLLIPMAIMLLLLLFCA. At 202–547 the chain is on the cytoplasmic side; that stretch reads RRFSLHIKKQ…IPLTRDEHHG (346 aa). Residues 225–264 enclose the PAS domain; the sequence is IQQSVLFESVFEGLIAIDSDYKITAINQTARRLLNLSQPE. A Histidine kinase domain is found at 347-542; the sequence is AVQHEHRNLI…IFTLYIPLTR (196 aa). The residue at position 350 (His350) is a Phosphohistidine; by autocatalysis.

In terms of assembly, homodimer. In vitro CitB and the CitA kinase domain form a complex, formation of which is enhanced by ATP. Post-translationally, autophosphorylated.

It localises to the cell inner membrane. It carries out the reaction ATP + protein L-histidine = ADP + protein N-phospho-L-histidine.. Member of the two-component regulatory system CitA/CitB. Probably activates CitB by phosphorylation. The periplasmic domain binds H-citrate(2-), which is essential for induction of the citrate-fermentation genes. This is Sensor histidine kinase CitA (citA) from Klebsiella pneumoniae.